Reading from the N-terminus, the 246-residue chain is UDP-N-acetyl-D-mannosaminuronic acid transferase (246 aa).

This sequence belongs to the glycosyltransferase 26 family.

It catalyses the reaction UDP-N-acetyl-alpha-D-mannosaminouronate + N-acetyl-alpha-D-glucosaminyl-di-trans,octa-cis-undecaprenyl diphosphate = beta-D-ManNAcA-(1-&gt;4)-alpha-D-GlcNAc-di-trans,octa-cis-undecaprenyl diphosphate + UDP + H(+). It functions in the pathway bacterial outer membrane biogenesis; enterobacterial common antigen biosynthesis. Catalyzes the synthesis of Und-PP-GlcNAc-ManNAcA (Lipid II), the second lipid-linked intermediate involved in enterobacterial common antigen (ECA) synthesis. The sequence is that of UDP-N-acetyl-D-mannosaminuronic acid transferase from Salmonella paratyphi A (strain ATCC 9150 / SARB42).